The chain runs to 163 residues: Phosphopantetheine adenylyltransferase (163 aa).

Thr10 is a binding site for substrate. ATP is bound by residues 10–11 (TF) and His18. Residues Lys42, Leu74, and Arg88 each coordinate substrate. ATP is bound by residues 89–91 (GLR), Glu99, and 124–130 (NSFISST).

It belongs to the bacterial CoaD family. In terms of assembly, homohexamer. Requires Mg(2+) as cofactor.

It localises to the cytoplasm. The catalysed reaction is (R)-4'-phosphopantetheine + ATP + H(+) = 3'-dephospho-CoA + diphosphate. It participates in cofactor biosynthesis; coenzyme A biosynthesis; CoA from (R)-pantothenate: step 4/5. Reversibly transfers an adenylyl group from ATP to 4'-phosphopantetheine, yielding dephospho-CoA (dPCoA) and pyrophosphate. The sequence is that of Phosphopantetheine adenylyltransferase from Shewanella baltica (strain OS155 / ATCC BAA-1091).